Consider the following 373-residue polypeptide: RNA cytidine acetyltransferase (373 aa).

Arg-53 lines the ATP pocket. Acetyl-CoA is bound by residues 216 to 218 (IAT) and 223 to 229 (TGMGYGS). The tract at residues 246–271 (GEFEEENEAAKPADEESDDESNLLKE) is disordered. Arg-313 provides a ligand contact to acetyl-CoA.

This sequence belongs to the RNA cytidine acetyltransferase family. NAT10 subfamily.

Its subcellular location is the nucleus. The protein resides in the nucleolus. It carries out the reaction a cytidine in 18S rRNA + acetyl-CoA + ATP + H2O = an N(4)-acetylcytidine in 18S rRNA + ADP + phosphate + CoA + H(+). It catalyses the reaction a cytidine in tRNA + acetyl-CoA + ATP + H2O = an N(4)-acetylcytidine in tRNA + ADP + phosphate + CoA + H(+). RNA cytidine acetyltransferase with specificity toward both 18S rRNA and tRNAs. Catalyzes the formation of N(4)-acetylcytidine (ac4C) in 18S rRNA. Required for early nucleolar cleavages of precursor rRNA at sites A0, A1 and A2 during 18S rRNA synthesis. Catalyzes the formation of ac4C in serine and leucine tRNAs. Requires a tRNA-binding adapter protein for full tRNA acetyltransferase activity but not for 18S rRNA acetylation. This Achlya ambisexualis (Water mold) protein is RNA cytidine acetyltransferase.